The following is a 608-amino-acid chain: 1-deoxy-D-xylulose-5-phosphate synthase (608 aa).

Residues histidine 66 and 107–109 each bind thiamine diphosphate; that span reads GHA. Aspartate 138 serves as a coordination point for Mg(2+). Thiamine diphosphate-binding positions include 139 to 140, asparagine 167, phenylalanine 277, and glutamate 350; that span reads GA. Asparagine 167 serves as a coordination point for Mg(2+).

This sequence belongs to the transketolase family. DXPS subfamily. In terms of assembly, homodimer. It depends on Mg(2+) as a cofactor. Thiamine diphosphate is required as a cofactor.

The enzyme catalyses D-glyceraldehyde 3-phosphate + pyruvate + H(+) = 1-deoxy-D-xylulose 5-phosphate + CO2. It functions in the pathway metabolic intermediate biosynthesis; 1-deoxy-D-xylulose 5-phosphate biosynthesis; 1-deoxy-D-xylulose 5-phosphate from D-glyceraldehyde 3-phosphate and pyruvate: step 1/1. Functionally, catalyzes the acyloin condensation reaction between C atoms 2 and 3 of pyruvate and glyceraldehyde 3-phosphate to yield 1-deoxy-D-xylulose-5-phosphate (DXP). The protein is 1-deoxy-D-xylulose-5-phosphate synthase of Thermotoga maritima (strain ATCC 43589 / DSM 3109 / JCM 10099 / NBRC 100826 / MSB8).